The chain runs to 579 residues: Isocitrate dehydrogenase kinase/phosphatase (579 aa).

ATP-binding positions include 324 to 330 and Lys-345; that span reads ADGTPGM. Asp-380 is an active-site residue.

The protein belongs to the AceK family.

It is found in the cytoplasm. It carries out the reaction L-seryl-[isocitrate dehydrogenase] + ATP = O-phospho-L-seryl-[isocitrate dehydrogenase] + ADP + H(+). Bifunctional enzyme which can phosphorylate or dephosphorylate isocitrate dehydrogenase (IDH) on a specific serine residue. This is a regulatory mechanism which enables bacteria to bypass the Krebs cycle via the glyoxylate shunt in response to the source of carbon. When bacteria are grown on glucose, IDH is fully active and unphosphorylated, but when grown on acetate or ethanol, the activity of IDH declines drastically concomitant with its phosphorylation. This chain is Isocitrate dehydrogenase kinase/phosphatase, found in Xanthomonas euvesicatoria pv. vesicatoria (strain 85-10) (Xanthomonas campestris pv. vesicatoria).